Consider the following 297-residue polypeptide: ATP synthase gamma chain (297 aa).

It belongs to the ATPase gamma chain family. In terms of assembly, F-type ATPases have 2 components, CF(1) - the catalytic core - and CF(0) - the membrane proton channel. CF(1) has five subunits: alpha(3), beta(3), gamma(1), delta(1), epsilon(1). CF(0) has three main subunits: a, b and c.

Its subcellular location is the cell membrane. In terms of biological role, produces ATP from ADP in the presence of a proton gradient across the membrane. The gamma chain is believed to be important in regulating ATPase activity and the flow of protons through the CF(0) complex. The chain is ATP synthase gamma chain from Renibacterium salmoninarum (strain ATCC 33209 / DSM 20767 / JCM 11484 / NBRC 15589 / NCIMB 2235).